The sequence spans 73 residues: MPALHIEDLPEKEKLKMEVEQLRKEVKLQRQQVSKCSEEIKNYIEERSREDPLVKGIPEDKNPFKEKGSCIIS.

Residues 54 to 73 (VKGIPEDKNPFKEKGSCIIS) are disordered. C70 is subject to Cysteine methyl ester. The S-farnesyl cysteine moiety is linked to residue C70. A propeptide spans 71–73 (IIS) (removed in mature form).

This sequence belongs to the G protein gamma family. In terms of assembly, g proteins are composed of 3 units, alpha, beta and gamma. Interacts with beta-1 and beta-3, but not with beta-2.

The protein localises to the cell membrane. Functionally, guanine nucleotide-binding proteins (G proteins) are involved as a modulator or transducer in various transmembrane signaling systems. The beta and gamma chains are required for the GTPase activity, for replacement of GDP by GTP, and for G protein-effector interaction. The polypeptide is Guanine nucleotide-binding protein G(I)/G(S)/G(O) subunit gamma-11 (GNG11) (Bos taurus (Bovine)).